The chain runs to 119 residues: Beta-2-microglobulin (119 aa).

The signal sequence occupies residues 1–20 (MARSVVVALLVLLSLSGLEA). The 90-residue stretch at 25 to 114 (PKIQVYSRHP…VTFPTPKTVK (90 aa)) folds into the Ig-like C1-type domain. A disulfide bond links Cys45 and Cys100.

This sequence belongs to the beta-2-microglobulin family. In terms of assembly, heterodimer of an alpha chain and a beta chain. Beta-2-microglobulin is the beta-chain of major histocompatibility complex class I molecules.

Its subcellular location is the secreted. Its function is as follows. Component of the class I major histocompatibility complex (MHC). Involved in the presentation of peptide antigens to the immune system. In Lagothrix lagotricha (Brown woolly monkey), this protein is Beta-2-microglobulin (B2M).